The sequence spans 449 residues: UDP-N-acetylmuramoylalanine--D-glutamate ligase (449 aa).

116–122 (GSNGKST) serves as a coordination point for ATP.

This sequence belongs to the MurCDEF family.

Its subcellular location is the cytoplasm. The catalysed reaction is UDP-N-acetyl-alpha-D-muramoyl-L-alanine + D-glutamate + ATP = UDP-N-acetyl-alpha-D-muramoyl-L-alanyl-D-glutamate + ADP + phosphate + H(+). The protein operates within cell wall biogenesis; peptidoglycan biosynthesis. In terms of biological role, cell wall formation. Catalyzes the addition of glutamate to the nucleotide precursor UDP-N-acetylmuramoyl-L-alanine (UMA). This Shewanella violacea (strain JCM 10179 / CIP 106290 / LMG 19151 / DSS12) protein is UDP-N-acetylmuramoylalanine--D-glutamate ligase.